Reading from the N-terminus, the 89-residue chain is NADH-ubiquinone oxidoreductase chain 4L (89 aa).

The next 3 helical transmembrane spans lie at 1–21 (MNLS…NRKN), 22–42 (IILM…LILI), and 55–75 (FAIY…GILV).

The protein belongs to the complex I subunit 4L family.

The protein localises to the mitochondrion membrane. It carries out the reaction a ubiquinone + NADH + 5 H(+)(in) = a ubiquinol + NAD(+) + 4 H(+)(out). Core subunit of the mitochondrial membrane respiratory chain NADH dehydrogenase (Complex I) that is believed to belong to the minimal assembly required for catalysis. Complex I functions in the transfer of electrons from NADH to the respiratory chain. The immediate electron acceptor for the enzyme is believed to be ubiquinone. The sequence is that of NADH-ubiquinone oxidoreductase chain 4L (ND4L) from Trichophyton rubrum (Athlete's foot fungus).